The sequence spans 458 residues: Retinoic acid receptor alpha-B (458 aa).

A modulating region spans residues 1 to 79 (MYESVDVVGL…PPSPPPPPRV (79 aa)). Positions 48-75 (HWSGSNHSVETQSTSSEEIVPSPPSPPP) are disordered. Residues 49 to 64 (WSGSNHSVETQSTSSE) show a composition bias toward polar residues. A DNA-binding region (nuclear receptor) is located at residues 80–155 (YKPCFVCQDK…VGMSKESVRN (76 aa)). NR C4-type zinc fingers lie at residues 83–103 (CFVC…CEGC) and 119–138 (CHRE…CQYC). Residues 156 to 177 (DRNKRKKDDKKQECLENYVLSP) are hinge. The NR LBD domain occupies 178–412 (DTEKMIEQVR…PLIQEMLENS (235 aa)). A 9aaTAD motif is present at residues 403 to 411 (PLIQEMLEN). The disordered stretch occupies residues 411 to 458 (NSEGLEGGGSKGAGGGGGGGGGKGAPPGSCSPSLSPSSAHSSPSAHSP). Residues 415–435 (LEGGGSKGAGGGGGGGGGKGA) show a composition bias toward gly residues. The span at 436–458 (PPGSCSPSLSPSSAHSSPSAHSP) shows a compositional bias: low complexity.

It belongs to the nuclear hormone receptor family. NR1 subfamily. Heterodimer; with an rxr molecule. Binds DNA preferentially as a rar/rxr heterodimer. In terms of tissue distribution, in the embryo, zygotic expression largely overlaps that of raraa, with high levels in hindbrain, lateral plate mesoderm (LPM) and tail bud, but in later stages rarab is expressed more broadly in the brain, pectoral fin bud and pharyngeal arches.

The protein resides in the nucleus. Its function is as follows. Receptor for retinoic acid. Retinoic acid receptors bind as heterodimers to their target response elements in response to their ligands, all-trans or 9-cis retinoic acid, and regulate gene expression in various biological processes. The rar/rxr heterodimers bind to the retinoic acid response elements (RARE) composed of tandem 5'-AGGTCA-3' sites known as DR1-DR5. Required for hindbrain development and, in lateral plate mesoderm, for specification of the pectoral fins. The polypeptide is Retinoic acid receptor alpha-B (Danio rerio (Zebrafish)).